We begin with the raw amino-acid sequence, 344 residues long: Dihydroorotase (344 aa).

Zn(2+)-binding residues include H14 and H16. Substrate is bound by residues 16-18 (HLR) and N42. Residues K100, H137, and H175 each contribute to the Zn(2+) site. N6-carboxylysine is present on K100. Residue H137 coordinates substrate. L220 is a substrate binding site. D248 provides a ligand contact to Zn(2+). Residue D248 is part of the active site. The substrate site is built by H252 and A264.

It belongs to the metallo-dependent hydrolases superfamily. DHOase family. Class II DHOase subfamily. As to quaternary structure, homodimer. Zn(2+) serves as cofactor.

It catalyses the reaction (S)-dihydroorotate + H2O = N-carbamoyl-L-aspartate + H(+). It participates in pyrimidine metabolism; UMP biosynthesis via de novo pathway; (S)-dihydroorotate from bicarbonate: step 3/3. Functionally, catalyzes the reversible cyclization of carbamoyl aspartate to dihydroorotate. The chain is Dihydroorotase from Cupriavidus taiwanensis (strain DSM 17343 / BCRC 17206 / CCUG 44338 / CIP 107171 / LMG 19424 / R1) (Ralstonia taiwanensis (strain LMG 19424)).